We begin with the raw amino-acid sequence, 123 residues long: Protein Wnt-7b (123 aa).

The O-palmitoleoyl serine; by PORCN moiety is linked to residue serine 1. The segment at 33–61 (VEVVRASRLRQPTFLKIKQIKSYQKPMET) is disordered linker. Cysteine 89 and cysteine 104 are oxidised to a cystine. The N-linked (GlcNAc...) asparagine glycan is linked to asparagine 90.

It belongs to the Wnt family. Palmitoleoylation is required for efficient binding to frizzled receptors. Depalmitoleoylation leads to Wnt signaling pathway inhibition.

It is found in the secreted. The protein localises to the extracellular space. It localises to the extracellular matrix. Functionally, ligand for members of the frizzled family of seven transmembrane receptors that functions in the canonical Wnt/beta-catenin signaling pathway. Required for normal fusion of the chorion and the allantois during placenta development. Required for central nervous system (CNS) angiogenesis and blood-brain barrier regulation. The chain is Protein Wnt-7b (WNT7B) from Anser caerulescens (Snow goose).